A 362-amino-acid polypeptide reads, in one-letter code: 45 kDa calcium-binding protein (362 aa).

The N-terminal stretch at 1-36 is a signal peptide; that stretch reads MVWPWVAMASRWGPLIGLAPCCLWLLGAVLLMDASA. N40 is a glycosylation site (N-linked (GlcNAc...) asparagine). 2 consecutive EF-hand domains span residues 98-133 and 137-172; these read RSRRKLMVIFSKVDVNTDRKISAKEMQRWIMEKTAE and EAMEESKTHFRAVDPDGDGHVSWDEYKVKFLASKGH. A Phosphoserine modification is found at S99. Ca(2+)-binding residues include D111, N113, D115, K117, E122, D150, D152, D154, H156, and E161. At T193 the chain carries Phosphothreonine. EF-hand domains lie at 197–232, 233–268, 278–313, and 314–349; these read LENLKDRWYQADSPPADLLLTEEEFLSFLHPEHSRG, MLRFMVKEIVRDLDQDGDKQLSVPEFISLPVGTVEN, WVKDRKKEFEELIDSNHDGIVTAEELESYMDPMNEY, and NALNEAKQMIAVADENQNHHLEPEEVLKYSEFFTGS. D213 contacts Ca(2+). At T217 the chain carries Phosphothreonine. The Ca(2+) site is built by E220, D246, D248, D250, Q252, and E257. Residue T265 is modified to Phosphothreonine. Ca(2+) is bound by residues D291, N293, and D295. T299 is modified (phosphothreonine). Ca(2+)-binding residues include E302, D327, N329, N331, H333, and E338. The segment at 309–362 is necessary for intracellular retention in Golgi apparatus lumen; sequence PMNEYNALNEAKQMIAVADENQNHHLEPEEVLKYSEFFTGSKLVDYARSVHEEF.

Belongs to the CREC family. Isoform 5 interacts with STXBP1; the interaction is enhanced in presence of calcium. Isoform 5 interacts with STX3. Ubiquitous. Isoform 5 is expressed in pancreas.

The protein localises to the golgi apparatus lumen. The protein resides in the cytoplasm. It localises to the cell membrane. It is found in the cell projection. Its subcellular location is the bleb. In terms of biological role, may regulate calcium-dependent activities in the endoplasmic reticulum lumen or post-ER compartment. Isoform 5 may be involved in the exocytosis of zymogens by pancreatic acini. The polypeptide is 45 kDa calcium-binding protein (SDF4) (Homo sapiens (Human)).